The following is a 424-amino-acid chain: SNF1-related protein kinase regulatory subunit gamma-1 (424 aa).

An N-acetylalanine modification is found at Ala2. A Phosphoserine modification is found at Ser44. 4 CBS domains span residues 63–131 (LSSD…EPPS), 185–244 (TFRW…CAGL), 263–324 (MSKD…YHDY), and 350–408 (IMSG…SGYF).

This sequence belongs to the 5'-AMP-activated protein kinase gamma subunit family. Subunit of a probable heterotrimeric complex consisting of an alpha catalytic (KIN10 or KIN11) subunit, and a beta (KINB) and a gamma (KING or SNF4) non-catalytic regulatory subunits. Interacts with HXK1 in mitochondrion. In terms of processing, sumoylated by SIZ1. Expressed in vegetative organs and, to lower extent, in reproductive organs.

It localises to the mitochondrion. Regulatory subunit of the probable trimeric SNF1-related protein kinase (SnRK) complex, which may play a role in a signal transduction cascade regulating gene expression and carbohydrate metabolism in higher plants. The SnRK complex may also be involved in the regulation of fatty acid synthesis by phosphorylation of acetyl-CoA carboxylase and in assimilation of nitrogen by phosphorylating nitrate reductase. This Arabidopsis thaliana (Mouse-ear cress) protein is SNF1-related protein kinase regulatory subunit gamma-1 (KING1).